Here is a 196-residue protein sequence, read N- to C-terminus: Small ribosomal subunit protein uS4c (196 aa).

A disordered region spans residues 17-38 (ALPGLTRKTPKSRSNLKKKFHS). Basic residues predominate over residues 24–38 (KTPKSRSNLKKKFHS). Residues 89 to 169 (MRLDNILFRL…LPKHLTIDTL (81 aa)) enclose the S4 RNA-binding domain.

This sequence belongs to the universal ribosomal protein uS4 family. As to quaternary structure, part of the 30S ribosomal subunit. Contacts protein S5. The interaction surface between S4 and S5 is involved in control of translational fidelity.

It localises to the plastid. The protein resides in the chloroplast. Its function is as follows. One of the primary rRNA binding proteins, it binds directly to 16S rRNA where it nucleates assembly of the body of the 30S subunit. Functionally, with S5 and S12 plays an important role in translational accuracy. The chain is Small ribosomal subunit protein uS4c (rps4) from Lygeum spartum.